The sequence spans 199 residues: Imidazole glycerol phosphate synthase subunit HisH (199 aa).

The Glutamine amidotransferase type-1 domain occupies 2 to 199; the sequence is RAVIIDYGVG…LTNVYRWLRK (198 aa). The active-site Nucleophile is Cys-76. Residues His-178 and Glu-180 contribute to the active site.

Heterodimer of HisH and HisF.

It is found in the cytoplasm. The catalysed reaction is 5-[(5-phospho-1-deoxy-D-ribulos-1-ylimino)methylamino]-1-(5-phospho-beta-D-ribosyl)imidazole-4-carboxamide + L-glutamine = D-erythro-1-(imidazol-4-yl)glycerol 3-phosphate + 5-amino-1-(5-phospho-beta-D-ribosyl)imidazole-4-carboxamide + L-glutamate + H(+). It carries out the reaction L-glutamine + H2O = L-glutamate + NH4(+). The protein operates within amino-acid biosynthesis; L-histidine biosynthesis; L-histidine from 5-phospho-alpha-D-ribose 1-diphosphate: step 5/9. Its function is as follows. IGPS catalyzes the conversion of PRFAR and glutamine to IGP, AICAR and glutamate. The HisH subunit catalyzes the hydrolysis of glutamine to glutamate and ammonia as part of the synthesis of IGP and AICAR. The resulting ammonia molecule is channeled to the active site of HisF. In Sulfolobus acidocaldarius (strain ATCC 33909 / DSM 639 / JCM 8929 / NBRC 15157 / NCIMB 11770), this protein is Imidazole glycerol phosphate synthase subunit HisH.